A 173-amino-acid polypeptide reads, in one-letter code: MPKYYCDYCDTYLTHDSPSVRKTHCQGRKHKDNVKFYYQKWMEEQAQHLIDATTAAFKAGKIANPFAPKPGAAIPPPANMQGPPRPVPPGPMGPGPNMLGPGPMGPMGPMMMGPNGPIRGPMAGPIMGPMGPMMGPMGHMGPMMGPIGGPMMSPMRPIMTNMPQPGQPPRAKE.

The Matrin-type zinc-finger motif lies at 4-36 (YYCDYCDTYLTHDSPSVRKTHCQGRKHKDNVKF). Positions 72–100 (AAIPPPANMQGPPRPVPPGPMGPGPNMLG) are disordered. Positions 73–94 (AIPPPANMQGPPRPVPPGPMGP) are enriched in pro residues.

Belongs to the U1 small nuclear ribonucleoprotein C family. In terms of assembly, U1 snRNP is composed of the 7 core Sm proteins B/B', D1, D2, D3, E, F and G that assemble in a heptameric protein ring on the Sm site of the small nuclear RNA to form the core snRNP, and at least 3 U1 snRNP-specific proteins U1-70K, U1-A and U1-C. U1-C interacts with U1 snRNA and the 5' splice-site region of the pre-mRNA.

The protein localises to the nucleus. Component of the spliceosomal U1 snRNP, which is essential for recognition of the pre-mRNA 5' splice-site and the subsequent assembly of the spliceosome. U1-C is directly involved in initial 5' splice-site recognition for both constitutive and regulated alternative splicing. The interaction with the 5' splice-site seems to precede base-pairing between the pre-mRNA and the U1 snRNA. Stimulates commitment or early (E) complex formation by stabilizing the base pairing of the 5' end of the U1 snRNA and the 5' splice-site region. This Pediculus humanus subsp. corporis (Body louse) protein is U1 small nuclear ribonucleoprotein C.